The following is an 86-amino-acid chain: Small ribosomal subunit protein uS17 (86 aa).

Belongs to the universal ribosomal protein uS17 family. As to quaternary structure, part of the 30S ribosomal subunit.

Functionally, one of the primary rRNA binding proteins, it binds specifically to the 5'-end of 16S ribosomal RNA. This chain is Small ribosomal subunit protein uS17, found in Dehalococcoides mccartyi (strain ATCC BAA-2266 / KCTC 15142 / 195) (Dehalococcoides ethenogenes (strain 195)).